Reading from the N-terminus, the 819-residue chain is Protein kinase C-binding protein NELL2 (819 aa).

Positions 1-24 (MHAMESRVLLRTFCVILGLEAVWG) are cleaved as a signal peptide. Asparagine 56, asparagine 228, asparagine 296, and asparagine 301 each carry an N-linked (GlcNAc...) asparagine glycan. In terms of domain architecture, Laminin G-like spans 58–231 (TKAFLFQDSP…AQCPDLNRTC (174 aa)). Residues 275-334 (RTCTMKGTTYREFESWTDGCKNCTCLNGTIQCETLVCPAPDCPAKSAPAYVDGKCCKECK) enclose the VWFC 1 domain. Positions 400–442 (GYDFCSEKHTCMENSVCRNLNDRAVCSCRDGFRALREDNAYCE) constitute an EGF-like 1 domain. Intrachain disulfides connect cysteine 404–cysteine 416, cysteine 410–cysteine 425, and cysteine 427–cysteine 441. Aspartate 443, isoleucine 444, and glutamate 446 together coordinate Ca(2+). An EGF-like 2; calcium-binding domain is found at 443-484 (DIDECAEGRHYCRENTMCVNTPGSFLCICQTGYIRIDDYSCT). 9 cysteine pairs are disulfide-bonded: cysteine 447/cysteine 460, cysteine 454/cysteine 469, cysteine 471/cysteine 483, cysteine 489/cysteine 502, cysteine 496/cysteine 511, cysteine 513/cysteine 524, cysteine 528/cysteine 538, cysteine 532/cysteine 544, and cysteine 546/cysteine 555. Residues asparagine 462, threonine 463, and serine 466 each coordinate Ca(2+). Positions 485-525 (EHDECLTNQHNCDENALCFNTVGGHNCVCKPGYTGNGTTCK) constitute an EGF-like 3; calcium-binding domain. Residue asparagine 520 is glycosylated (N-linked (GlcNAc...) asparagine). The EGF-like 4 domain maps to 526–556 (AFCKDGCRNGGACIAANVCACPQGFTGPSCE). Threonine 551 is a glycosylation site (O-linked (GlcNAc...) threonine). The Ca(2+) site is built by aspartate 558, isoleucine 559, and glutamate 561. The EGF-like 5; calcium-binding domain occupies 558–604 (DIDECSEGFVQCDSRANCINLPGWYHCECRDGYHDNGMFAPGGESCE). 3 disulfides stabilise this stretch: cysteine 562/cysteine 575, cysteine 569/cysteine 584, and cysteine 586/cysteine 603. Asparagine 577, leucine 578, and tryptophan 581 together coordinate Ca(2+). Ca(2+) is bound by residues aspartate 605, isoleucine 606, and glutamate 608. The EGF-like 6; calcium-binding domain maps to 605 to 640 (DIDECGTGRHSCANDTICFNLDGGYDCRCPHGKNCT). 3 cysteine pairs are disulfide-bonded: cysteine 609/cysteine 622, cysteine 616/cysteine 631, and cysteine 633/cysteine 639. N-linked (GlcNAc...) asparagine glycosylation occurs at asparagine 618. Asparagine 624, leucine 625, and glycine 628 together coordinate Ca(2+). N-linked (GlcNAc...) asparagine glycosylation is present at asparagine 638. VWFC domains are found at residues 641-696 (GDCV…PECD) and 701-759 (SQCL…PRCV).

As to quaternary structure, homotrimer. Binds to PRKCB. Interacts with NICOL1; this interaction triggers epididymal differentiation. Binds to PRKCB. In terms of tissue distribution, widely expressed. Expressed in cortical astrocytes but not in neuron. As to expression, widely expressed in brain. High expression is observed in telencephalic and diencephalic glutamatergic neurons, while no expression is found in GABAergic and GNRH neurons.

It is found in the secreted. Its subcellular location is the cytoplasm. Its function is as follows. Plays multiple roles In neural tissues, regulates neuronal proliferation, survival, differentiation, polarization, as well as axon guidance and synaptic functions. Plays an important role in axon development during neuronal differentiation through the MAPK intracellular signaling pathway. Via binding to its receptor ROBO3, plays a role in axon guidance, functioning as a repulsive axon guidance cue that contributes to commissural axon guidance to the midline. Required for neuron survival through the modulation of MAPK signaling pathways too. Involved in the regulation of hypothalamic GNRH secretion and the control of puberty. Epididymal-secreted protein that signals through a ROS1-pathway to regulate the epididymal initial segment (IS) maturation, sperm maturation and male fertility. Functionally, acts as an endogenous inhibitor of PRKCB in glia. This Rattus norvegicus (Rat) protein is Protein kinase C-binding protein NELL2 (Nell2).